A 155-amino-acid chain; its full sequence is Small ribosomal subunit protein bS6 (155 aa).

Residues 115 to 137 show a composition bias toward basic and acidic residues; that stretch reads EADAAKAEADAARVEAEAKKAET. A disordered region spans residues 115-155; that stretch reads EADAAKAEADAARVEAEAKKAETDETDETVDAETPENEEEN. The span at 138–155 shows a compositional bias: acidic residues; it reads DETDETVDAETPENEEEN.

The protein belongs to the bacterial ribosomal protein bS6 family.

Functionally, binds together with bS18 to 16S ribosomal RNA. The chain is Small ribosomal subunit protein bS6 from Desulforapulum autotrophicum (strain ATCC 43914 / DSM 3382 / VKM B-1955 / HRM2) (Desulfobacterium autotrophicum).